The primary structure comprises 479 residues: UDP-glycosyltransferase 84A3 (479 aa).

Residue His19 is the Proton acceptor of the active site. Position 19 (His19) interacts with an anthocyanidin. UDP-alpha-D-glucose-binding residues include Gln346, His361, Trp364, Asn365, Ser366, and Glu369. Residue Gly384 participates in an anthocyanidin binding. Asp385 and Gln386 together coordinate UDP-alpha-D-glucose.

It belongs to the UDP-glycosyltransferase family.

It carries out the reaction (E)-4-coumarate + UDP-alpha-D-glucose = 4-O-(beta-D-glucosyl)-trans-4-coumarate + UDP + H(+). It catalyses the reaction (E)-ferulate + UDP-alpha-D-glucose = 1-O-[(E)-feruloyl]-beta-D-glucose + UDP. The enzyme catalyses (E)-caffeate + UDP-alpha-D-glucose = 1-O-[(E)-caffeoyl]-beta-D-glucose + UDP. The catalysed reaction is (E)-sinapate + UDP-alpha-D-glucose = 1-O-(trans-sinapoyl)-beta-D-glucose + UDP. It carries out the reaction (E)-cinnamate + UDP-alpha-D-glucose = 1-O-(trans-cinnamoyl)-beta-D-glucose + UDP. Its function is as follows. UDP-glucosyltransferase that forms glucose esters with phenylpropanoids. Glucosylates 4-coumarate, ferulate, caffeate, sinapate and cinnamate. The polypeptide is UDP-glycosyltransferase 84A3 (Arabidopsis thaliana (Mouse-ear cress)).